Here is a 79-residue protein sequence, read N- to C-terminus: Conotoxin MIVA (79 aa).

The first 21 residues, 1–21 (MGMRMMFTVFLLVVLATTVVS), serve as a signal peptide directing secretion. Residues 22-38 (IPSDRASDGRNAVVHER) constitute a propeptide that is removed on maturation. 4-hydroxyproline is present on proline 40. Glutamate 41 carries the post-translational modification 4-carboxyglutamate. Residues threonine 45 and threonine 47 are each glycosylated (O-linked (HexNAc...) threonine). 4-hydroxyproline occurs at positions 55, 60, 61, 69, 70, and 74. Proline 74 carries the post-translational modification Proline amide. Residues 75-79 (GRRND) constitute a propeptide that is removed on maturation.

In terms of processing, O-linked glycan consists of Hex4-HexNAc2 hexasaccharide. Contains 3 disulfide bonds. As to expression, expressed by the venom duct.

The protein localises to the secreted. Its function is as follows. Probable neurotoxin with ion channel inhibitor activity. This Conus magus (Magical cone) protein is Conotoxin MIVA.